We begin with the raw amino-acid sequence, 142 residues long: Rhinocerosin (142 aa).

The N-terminal stretch at 1–16 (MMKLYIVFGFIAFSAA) is a signal peptide. Residues 17–70 (YVVPEGYYEPEYYPADGYESERVARASPAELIFDEDLADEPEVEEPQYYIRTRR) constitute a propeptide that is removed on maturation. The interval 72–96 (LQPGAPNFPMPGSQLPTSITSNIEK) is disordered. Polar residues predominate over residues 85–96 (QLPTSITSNIEK).

Belongs to the coleoptericin family. Strongly expressed in the fat body and the Malpighian tubules, and weakly expressed in hemocytes and midgut.

The protein resides in the secreted. Its function is as follows. Has strong antibacterial activity against E.coli, Streptococcus pyogenes, Staphylococcus aureus but not against Pseudomonas aeruginosa. This chain is Rhinocerosin, found in Oryctes rhinoceros (Coconut rhinoceros beetle).